We begin with the raw amino-acid sequence, 496 residues long: L-arabinose isomerase (496 aa).

4 residues coordinate Mn(2+): Glu-306, Glu-331, His-348, and His-447.

This sequence belongs to the arabinose isomerase family. It depends on Mn(2+) as a cofactor.

The catalysed reaction is beta-L-arabinopyranose = L-ribulose. It functions in the pathway carbohydrate degradation; L-arabinose degradation via L-ribulose; D-xylulose 5-phosphate from L-arabinose (bacterial route): step 1/3. Functionally, catalyzes the conversion of L-arabinose to L-ribulose. The chain is L-arabinose isomerase from Geobacillus kaustophilus (strain HTA426).